The primary structure comprises 894 residues: Phosphoenolpyruvate carboxylase (894 aa).

Active-site residues include His-143 and Lys-556.

The protein belongs to the PEPCase type 1 family. Requires Mg(2+) as cofactor.

It catalyses the reaction oxaloacetate + phosphate = phosphoenolpyruvate + hydrogencarbonate. Functionally, forms oxaloacetate, a four-carbon dicarboxylic acid source for the tricarboxylic acid cycle. The chain is Phosphoenolpyruvate carboxylase from Acinetobacter baylyi (strain ATCC 33305 / BD413 / ADP1).